The following is a 92-amino-acid chain: Subtilisin inhibitor 1 (92 aa).

A compositionally biased stretch (polar residues) spans 1 to 12; sequence QEQGTNPSQEQN. Positions 1–31 are disordered; the sequence is QEQGTNPSQEQNVPLPRNYKQALETNTPTKT.

It belongs to the protease inhibitor I13 (potato type I serine protease inhibitor) family.

Its function is as follows. Inhibitor of subtilisin. The chain is Subtilisin inhibitor 1 from Phaseolus angularis (Azuki bean).